The sequence spans 282 residues: Bis(5'-nucleosyl)-tetraphosphatase, symmetrical (282 aa).

The protein belongs to the Ap4A hydrolase family.

It catalyses the reaction P(1),P(4)-bis(5'-adenosyl) tetraphosphate + H2O = 2 ADP + 2 H(+). Its function is as follows. Hydrolyzes diadenosine 5',5'''-P1,P4-tetraphosphate to yield ADP. The polypeptide is Bis(5'-nucleosyl)-tetraphosphatase, symmetrical (Klebsiella pneumoniae (strain 342)).